Reading from the N-terminus, the 231-residue chain is Large ribosomal subunit protein uL1 (231 aa).

This sequence belongs to the universal ribosomal protein uL1 family. In terms of assembly, part of the 50S ribosomal subunit.

Functionally, binds directly to 23S rRNA. The L1 stalk is quite mobile in the ribosome, and is involved in E site tRNA release. Protein L1 is also a translational repressor protein, it controls the translation of the L11 operon by binding to its mRNA. This is Large ribosomal subunit protein uL1 from Neisseria gonorrhoeae (strain ATCC 700825 / FA 1090).